The primary structure comprises 169 residues: MSGTHKKLGARHKARKRAVDFLFEAEARDLDPVDLATERAELSGKDDSVAPVAPYTVTVVTGVAENLDRLDEVIRSHLQDWTLERLPAVDRAILRIAVWELFHATDVPPVVAVDEAVELAKQLSTDESPGFVNGILGQVVLVAPQVRSAAAATSRRTETAGGESNDAGS.

Residues 150–169 (AAATSRRTETAGGESNDAGS) form a disordered region.

Belongs to the NusB family.

In terms of biological role, involved in transcription antitermination. Required for transcription of ribosomal RNA (rRNA) genes. Binds specifically to the boxA antiterminator sequence of the ribosomal RNA (rrn) operons. This is Transcription antitermination protein NusB from Rhodococcus jostii (strain RHA1).